A 447-amino-acid polypeptide reads, in one-letter code: N-succinylarginine dihydrolase (447 aa).

Substrate-binding positions include 19-28, Asn110, and 137-138; these read AGLSFGNEAS and HR. The active site involves Glu174. Arg212 lines the substrate pocket. The active site involves His248. Positions 250 and 359 each coordinate substrate. Cys365 functions as the Nucleophile in the catalytic mechanism.

Belongs to the succinylarginine dihydrolase family. As to quaternary structure, homodimer.

The enzyme catalyses N(2)-succinyl-L-arginine + 2 H2O + 2 H(+) = N(2)-succinyl-L-ornithine + 2 NH4(+) + CO2. Its pathway is amino-acid degradation; L-arginine degradation via AST pathway; L-glutamate and succinate from L-arginine: step 2/5. In terms of biological role, catalyzes the hydrolysis of N(2)-succinylarginine into N(2)-succinylornithine, ammonia and CO(2). In Escherichia coli O8 (strain IAI1), this protein is N-succinylarginine dihydrolase.